The following is a 589-amino-acid chain: Leucine-rich repeat and immunoglobulin-like domain-containing nogo receptor-interacting protein 3 (589 aa).

Positions 1-23 (MTCWLHMLGLHLLLLPTAPLAAG) are cleaved as a signal peptide. The LRRNT domain occupies 24 to 53 (CPARCECSASTRTVACGRRRLTAIPEGIPA). Topologically, residues 24–528 (CPARCECSAS…LDLTTILVST (505 aa)) are extracellular. LRR repeat units lie at residues 54-75 (ETRM…DLAS), 78-99 (TLEE…AFAN), 102-123 (RLRV…VFTH), 126-147 (SLTL…SFQD), 150-171 (SLQR…AFAG), 174-195 (GLAE…SLGH), 206-227 (HLAI…SHLE), 246-267 (NLTS…ALRQ), 270-291 (HLTC…SFRD), 294-315 (RLRE…AFVG), and 318-339 (QIRL…TFHS). An N-linked (GlcNAc...) asparagine glycan is attached at asparagine 184. N-linked (GlcNAc...) asparagine glycosylation is found at asparagine 246, asparagine 256, and asparagine 275. An N-linked (GlcNAc...) asparagine glycan is attached at asparagine 323. One can recognise an LRRCT domain in the interval 351-405 (NPLACDCRLLWIVQRRKTLNFDGRLPACATPAEVRGDALHNLPDSVLFEYFVCRK). The 90-residue stretch at 406–495 (PKIRERRLQH…GNDTYFATLT (90 aa)) folds into the Ig-like C2-type domain. A disulfide bridge links cysteine 428 with cysteine 479. Residues asparagine 487, asparagine 501, and asparagine 509 are each glycosylated (N-linked (GlcNAc...) asparagine). A helical transmembrane segment spans residues 529–549 (AMGCITFLGVVLFCFLLLFVW). Over 550–589 (SRGRGQHKNNFSVEYSFRKVDGPAAAAGQGGARKFNMKMI) the chain is Cytoplasmic.

The protein localises to the membrane. This Mus musculus (Mouse) protein is Leucine-rich repeat and immunoglobulin-like domain-containing nogo receptor-interacting protein 3 (Lingo3).